The sequence spans 273 residues: Undecaprenyl-diphosphatase (273 aa).

Transmembrane regions (helical) follow at residues 48 to 68 (AANT…VVVF), 89 to 109 (LTLL…VLFE), 116 to 136 (LFST…MIVA), 152 to 172 (ITYK…WPGF), 193 to 213 (ADFT…LSLL), 222 to 242 (ADIP…LLAI), and 252 to 272 (IRLV…YFLY).

The protein belongs to the UppP family.

The protein resides in the cell membrane. It carries out the reaction di-trans,octa-cis-undecaprenyl diphosphate + H2O = di-trans,octa-cis-undecaprenyl phosphate + phosphate + H(+). Functionally, catalyzes the dephosphorylation of undecaprenyl diphosphate (UPP). Confers resistance to bacitracin. In Geobacillus thermodenitrificans (strain NG80-2), this protein is Undecaprenyl-diphosphatase.